The following is a 456-amino-acid chain: ATP synthase subunit beta 1 (456 aa).

152–159 (GGAGVGKS) lines the ATP pocket.

Belongs to the ATPase alpha/beta chains family. F-type ATPases have 2 components, CF(1) - the catalytic core - and CF(0) - the membrane proton channel. CF(1) has five subunits: alpha(3), beta(3), gamma(1), delta(1), epsilon(1). CF(0) has three main subunits: a(1), b(2) and c(9-12). The alpha and beta chains form an alternating ring which encloses part of the gamma chain. CF(1) is attached to CF(0) by a central stalk formed by the gamma and epsilon chains, while a peripheral stalk is formed by the delta and b chains.

Its subcellular location is the cell membrane. It catalyses the reaction ATP + H2O + 4 H(+)(in) = ADP + phosphate + 5 H(+)(out). Its function is as follows. Produces ATP from ADP in the presence of a proton gradient across the membrane. The catalytic sites are hosted primarily by the beta subunits. In Listeria monocytogenes serotype 4b (strain F2365), this protein is ATP synthase subunit beta 1.